Here is an 854-residue protein sequence, read N- to C-terminus: Cell division control protein 24 (854 aa).

Positions Met1–Ser14 are enriched in polar residues. The tract at residues Met1–Ser24 is disordered. Residues Pro135–Pro246 enclose the Calponin-homology (CH) domain. Residues Glu278 to Asn454 enclose the DH domain. A PH domain is found at Arg478 to His668. Disordered regions lie at residues Ile542–Ile571 and Gln674–Glu745. The span at Ser682–His707 shows a compositional bias: low complexity. The PB1 domain occupies Ser761–Tyr854.

Interacts with AXL2.

In terms of biological role, promotes the exchange of CDC42-bound GDP by GTP. Controls the polarity of calmodulin, and the calcium regulatory process of bud emergence. CDC24 may be involved in the initial selection and organization of the budding site. The chain is Cell division control protein 24 (CDC24) from Saccharomyces cerevisiae (strain ATCC 204508 / S288c) (Baker's yeast).